The primary structure comprises 584 residues: Mitochondrial sodium/calcium exchanger protein (584 aa).

Residues Met1–Gly26 form the signal peptide. At Thr27–Leu95 the chain is on the extracellular side. N-linked (GlcNAc...) asparagine glycosylation occurs at Asn60. Residues Leu96–Val116 traverse the membrane as a helical segment. The Cytoplasmic portion of the chain corresponds to Thr117–Ala140. A helical transmembrane segment spans residues Gly141 to Phe161. The Extracellular segment spans residues Ser162 to Gly168. A helical membrane pass occupies residues Leu169–Ile189. Over Thr190–Arg200 the chain is Cytoplasmic. The helical transmembrane segment at Pro201 to Phe221 threads the bilayer. Topologically, residues Arg222–Thr226 are extracellular. A helical membrane pass occupies residues Leu227 to Cys247. The Cytoplasmic segment spans residues Thr248–Lys325. Ser258 is subject to Phosphoserine; by PKA. The helical transmembrane segment at Ala326 to Asp346 threads the bilayer. Over Pro347–Cys360 the chain is Extracellular. A helical transmembrane segment spans residues Leu361 to Val381. Over Tyr382–Glu383 the chain is Cytoplasmic. Residues Ile384–Val404 traverse the membrane as a helical segment. Over Thr405–Arg416 the chain is Extracellular. Residues Leu417–Ala437 traverse the membrane as a helical segment. Residues Thr438–Arg445 lie on the Cytoplasmic side of the membrane. Residues Ser446 to Gly466 traverse the membrane as a helical segment. The Extracellular portion of the chain corresponds to Asn467–Ala487. A helical membrane pass occupies residues Phe488 to Leu508. Topologically, residues Leu509–Gly524 are cytoplasmic. The helical transmembrane segment at Leu525 to Val545 threads the bilayer. Residues Pro546–Phe558 lie on the Extracellular side of the membrane. A helical transmembrane segment spans residues Cys559–Ile579. The Cytoplasmic segment spans residues His580 to Met584.

Belongs to the Ca(2+):cation antiporter (CaCA) (TC 2.A.19) family. SLC24A subfamily. Post-translationally, phosphorylation at Ser-258 by PKA prevents calcium overload. In terms of tissue distribution, present in pancreatic beta-cells (at protein level).

The protein localises to the mitochondrion inner membrane. The enzyme catalyses Ca(2+)(in) + 3 Na(+)(out) = Ca(2+)(out) + 3 Na(+)(in). It carries out the reaction 3 Li(+)(out) + Ca(2+)(in) = 3 Li(+)(in) + Ca(2+)(out). Inhibited by the sodium/calcium exchanger inhibitor CGP-37157. Strongly inhibited by zinc. Its function is as follows. Mitochondrial sodium/calcium antiporter that mediates sodium-dependent calcium efflux from mitochondrion, by mediating the exchange of 3 sodium ions per 1 calcium ion. Plays a central role in mitochondrial calcium homeostasis by mediating mitochondrial calcium extrusion: calcium efflux is essential for mitochondrial function and cell survival, notably in cardiomyocytes. Regulates rates of glucose-dependent insulin secretion in pancreatic beta-cells during the first phase of insulin secretion: acts by mediating efflux of calcium from mitochondrion, thereby affecting cytoplasmic calcium responses. Required for store-operated Ca(2+) entry (SOCE) and Ca(2+) release-activated Ca(2+) (CRAC) channel regulation: sodium transport by SLC8B1 leads to promote calcium-shuttling that modulates mitochondrial redox status, thereby regulating SOCE activity. Involved in B-lymphocyte chemotaxis. Able to transport Ca(2+) in exchange of either Li(+) or Na(+), explaining how Li(+) catalyzes Ca(2+) exchange. In contrast to other members of the family its function is independent of K(+). The polypeptide is Mitochondrial sodium/calcium exchanger protein (Homo sapiens (Human)).